Consider the following 502-residue polypeptide: Cyclin-dependent kinase 19 (502 aa).

Methionine 1 is modified (N-acetylmethionine). Residues 21–335 (EYEGCKVGRG…SEQALQDPYF (315 aa)) form the Protein kinase domain. ATP-binding positions include 27 to 35 (VGRGTYGHV) and lysine 52. Residue aspartate 151 is the Proton acceptor of the active site. The tract at residues 359–502 (LNEDDPEEKG…YHPSHQAHRY (144 aa)) is disordered. A compositionally biased stretch (low complexity) spans 371 to 392 (NQQQQQNQHQQPTAPPQQAAAP). Residues 408-421 (TAGGAGAGVGGTGA) show a composition bias toward gly residues. Residues 424 to 435 (QHSQDSSLNQVP) are compositionally biased toward polar residues. Serine 449 carries the phosphoserine modification. Polar residues predominate over residues 458-467 (YQHSSSRLNY). Residues 468–496 (QSSVQGSSQSQSTLGYSSSSQQSSQYHPS) are compositionally biased toward low complexity.

The protein belongs to the protein kinase superfamily. CMGC Ser/Thr protein kinase family. CDC2/CDKX subfamily.

It localises to the cytoplasm. Its subcellular location is the perinuclear region. The protein resides in the nucleus. It carries out the reaction L-seryl-[protein] + ATP = O-phospho-L-seryl-[protein] + ADP + H(+). It catalyses the reaction L-threonyl-[protein] + ATP = O-phospho-L-threonyl-[protein] + ADP + H(+). The sequence is that of Cyclin-dependent kinase 19 (CDK19) from Homo sapiens (Human).